The following is a 106-amino-acid chain: Transcription initiation factor IIA subunit 2 (106 aa).

This sequence belongs to the TFIIA subunit 2 family. As to quaternary structure, TFIIA is a heterodimer of the large unprocessed subunit 1 and a small subunit gamma. It was originally believed to be a heterotrimer of an alpha (p30), a beta (p20) and a gamma (p14) subunit. Forms a complex with Moonshiner/CG12721 and Trf2. In terms of tissue distribution, ubiquitous.

It is found in the nucleus. TFIIA is a component of the transcription machinery of RNA polymerase II and plays an important role in transcriptional activation. TFIIA in a complex with TBP mediates transcriptional activity. Part of a rhi-dependent transcription machinery that enables the generation of piRNA precursors from heterochromatin while maintaining the suppression of transposon-encoded promoters and enhancers. Forms a complex with Moonshiner/CG12721 and Trf2 which recruit transcriptional machinery to heterochromatin to initiate the bidirectional transcription of piRNA clusters, by interacting with the RDC (rhi, del and cuff) complex that binds to repressive H3K9me3 marks in the chromatin. This mechanism allows transcription to occur in piRNA clusters despite the lack of proper promoter elements and in the presence of the repressive H3K9me3 mark. The sequence is that of Transcription initiation factor IIA subunit 2 (TfIIA-S) from Drosophila melanogaster (Fruit fly).